A 205-amino-acid chain; its full sequence is ATP phosphoribosyltransferase (205 aa).

This sequence belongs to the ATP phosphoribosyltransferase family. Short subfamily.

The protein resides in the cytoplasm. It carries out the reaction 1-(5-phospho-beta-D-ribosyl)-ATP + diphosphate = 5-phospho-alpha-D-ribose 1-diphosphate + ATP. Its pathway is amino-acid biosynthesis; L-histidine biosynthesis; L-histidine from 5-phospho-alpha-D-ribose 1-diphosphate: step 1/9. Functionally, catalyzes the condensation of ATP and 5-phosphoribose 1-diphosphate to form N'-(5'-phosphoribosyl)-ATP (PR-ATP). Has a crucial role in the pathway because the rate of histidine biosynthesis seems to be controlled primarily by regulation of HisG enzymatic activity. This Thermococcus gammatolerans (strain DSM 15229 / JCM 11827 / EJ3) protein is ATP phosphoribosyltransferase.